A 266-amino-acid chain; its full sequence is Interleukin-1 beta (266 aa).

Positions 1–114 (MAAVPELTSE…KTDADNFMSD (114 aa)) are excised as a propeptide.

Belongs to the IL-1 family. In terms of assembly, monomer. In its precursor form, weakly interacts with full-length MEFV; the mature cytokine does not interact at all. Interacts with integrins ITGAV:ITGBV and ITGA5:ITGB1; integrin-binding is required for IL1B signaling. Interacts with cargo receptor TMED10; the interaction is direct and is required for the secretion of IL1B mature form. Interacts with HSP90AB1; the interaction facilitates cargo translocation into the ERGIC. Interacts with HSP90B1; the interaction facilitates cargo translocation into the ERGIC.

The protein localises to the cytoplasm. It localises to the cytosol. The protein resides in the secreted. Its subcellular location is the lysosome. It is found in the extracellular exosome. Its function is as follows. Potent pro-inflammatory cytokine. Initially discovered as the major endogenous pyrogen, induces prostaglandin synthesis, neutrophil influx and activation, T-cell activation and cytokine production, B-cell activation and antibody production, and fibroblast proliferation and collagen production. Promotes Th17 differentiation of T-cells. Synergizes with IL12/interleukin-12 to induce IFNG synthesis from T-helper 1 (Th1) cells. Plays a role in angiogenesis by inducing VEGF production synergistically with TNF and IL6. Involved in transduction of inflammation downstream of pyroptosis: its mature form is specifically released in the extracellular milieu by passing through the gasdermin-D (GSDMD) pore. The protein is Interleukin-1 beta (IL1B) of Canis lupus familiaris (Dog).